The sequence spans 83 residues: Small ribosomal subunit protein bS16 (83 aa).

It belongs to the bacterial ribosomal protein bS16 family.

This is Small ribosomal subunit protein bS16 from Shewanella frigidimarina (strain NCIMB 400).